A 271-amino-acid chain; its full sequence is Ribosomal RNA small subunit methyltransferase A (271 aa).

S-adenosyl-L-methionine is bound by residues His-11, Leu-13, Gly-38, Glu-58, Asp-86, and Asn-101.

Belongs to the class I-like SAM-binding methyltransferase superfamily. rRNA adenine N(6)-methyltransferase family. RsmA subfamily.

The protein resides in the cytoplasm. It carries out the reaction adenosine(1518)/adenosine(1519) in 16S rRNA + 4 S-adenosyl-L-methionine = N(6)-dimethyladenosine(1518)/N(6)-dimethyladenosine(1519) in 16S rRNA + 4 S-adenosyl-L-homocysteine + 4 H(+). Functionally, specifically dimethylates two adjacent adenosines (A1518 and A1519) in the loop of a conserved hairpin near the 3'-end of 16S rRNA in the 30S particle. May play a critical role in biogenesis of 30S subunits. The chain is Ribosomal RNA small subunit methyltransferase A from Helicobacter pylori (strain J99 / ATCC 700824) (Campylobacter pylori J99).